The sequence spans 403 residues: Arginine deiminase (403 aa).

Cysteine 388 functions as the Amidino-cysteine intermediate in the catalytic mechanism.

This sequence belongs to the arginine deiminase family.

It is found in the cytoplasm. It carries out the reaction L-arginine + H2O = L-citrulline + NH4(+). The protein operates within amino-acid degradation; L-arginine degradation via ADI pathway; carbamoyl phosphate from L-arginine: step 1/2. This chain is Arginine deiminase, found in Mycoplasma capricolum subsp. capricolum (strain California kid / ATCC 27343 / NCTC 10154).